A 191-amino-acid polypeptide reads, in one-letter code: Ferric nitrobindin-like protein (191 aa).

Residues 20–26 (GDWAGAG) carry the GXWXGXG motif.

It belongs to the nitrobindin family.

The polypeptide is Ferric nitrobindin-like protein (Streptomyces coelicolor (strain ATCC BAA-471 / A3(2) / M145)).